Consider the following 347-residue polypeptide: MDRSFASEIQARIDNKTKPLGALGLLEKVALELALIQSQDKLQSVETIEIRKPTMLVFAGDHGIAKEGVSIAPSAVTQQMVANFLAGGAAINCFCDLNQIDFKVVDCGMLSPIDTLVPDFKHHPNLIERRLGNGTANFAKQTAMSLEQVALGLEYGAKVAQQAILNGSNLLMFGEMGIGNTSSASALLTALSLLEVDHCVGYGTGITQEQLNRKIKLVAQGVNRCHDLDTKGALAQVGGFEIVQMVGAFLEAKRHKTPVLVDGFIVSVAAYVATLLDEETRDYMLFAHNSEENGHKFVLECLQAEPLLDLGLRLGEGTGAALALPLVKAAAQFYNNMASFESAGVTV.

Catalysis depends on E316, which acts as the Proton acceptor.

The protein belongs to the CobT family.

It carries out the reaction 5,6-dimethylbenzimidazole + nicotinate beta-D-ribonucleotide = alpha-ribazole 5'-phosphate + nicotinate + H(+). It participates in nucleoside biosynthesis; alpha-ribazole biosynthesis; alpha-ribazole from 5,6-dimethylbenzimidazole: step 1/2. Catalyzes the synthesis of alpha-ribazole-5'-phosphate from nicotinate mononucleotide (NAMN) and 5,6-dimethylbenzimidazole (DMB). This is Nicotinate-nucleotide--dimethylbenzimidazole phosphoribosyltransferase from Vibrio campbellii (strain ATCC BAA-1116).